A 173-amino-acid chain; its full sequence is ATP-dependent protease subunit HslV (173 aa).

Residue threonine 2 is part of the active site. Positions 158, 161, and 164 each coordinate Na(+).

This sequence belongs to the peptidase T1B family. HslV subfamily. A double ring-shaped homohexamer of HslV is capped on each side by a ring-shaped HslU homohexamer. The assembly of the HslU/HslV complex is dependent on binding of ATP.

The protein resides in the cytoplasm. The catalysed reaction is ATP-dependent cleavage of peptide bonds with broad specificity.. Its activity is regulated as follows. Allosterically activated by HslU binding. Protease subunit of a proteasome-like degradation complex believed to be a general protein degrading machinery. The sequence is that of ATP-dependent protease subunit HslV from Actinobacillus succinogenes (strain ATCC 55618 / DSM 22257 / CCUG 43843 / 130Z).